Here is a 311-residue protein sequence, read N- to C-terminus: E3 ubiquitin-protein ligase RNF126 (311 aa).

4 residues coordinate Zn(2+): Cys-13, Cys-16, Cys-29, and Cys-32. The segment at 13 to 32 (CHSCTAEIIPRLPEYTCPRC) adopts a C4-type zinc-finger fold. Disordered regions lie at residues 42-62 (ETRN…NRPS) and 95-133 (GTSG…RRAA). A compositionally biased stretch (basic and acidic residues) spans 101-114 (EEPRDGESRREHQS). Over residues 123 to 133 (PRARLSTRRAA) the composition is skewed to basic residues. Residues 227–268 (CPVCKEDYTVGESVRQLPCNHLFHNDCIIPWLEQHDTCPVCR) form an RING-type zinc finger. The segment at 274-311 (QNTATNPPGLTEMTFSSSSTSSSSSTSPTDENNAANNS) is disordered. Positions 289–300 (SSSSTSSSSSTS) are enriched in low complexity. Over residues 301 to 311 (PTDENNAANNS) the composition is skewed to polar residues.

It localises to the cytoplasm. The protein localises to the nucleus. It carries out the reaction S-ubiquitinyl-[E2 ubiquitin-conjugating enzyme]-L-cysteine + [acceptor protein]-L-lysine = [E2 ubiquitin-conjugating enzyme]-L-cysteine + N(6)-ubiquitinyl-[acceptor protein]-L-lysine.. It participates in protein modification; protein ubiquitination. Functionally, E3 ubiquitin-protein ligase that mediates ubiquitination oF target proteins. Depending on the associated E2 ligase, mediates 'Lys-27'-, 'Lys-29'-, 'Lys-48'- and/or 'Lys-63'-linked polyubiquitination of substrates. Part of a BAG6-dependent quality control process ensuring that proteins of the secretory pathway that are mislocalized to the cytosol are degraded by the proteasome. Probably acts by providing the ubiquitin ligase activity associated with the BAG6 complex and be responsible for ubiquitination of the hydrophobic mislocalized proteins and their targeting to the proteasome. The chain is E3 ubiquitin-protein ligase RNF126 from Xenopus tropicalis (Western clawed frog).